Consider the following 208-residue polypeptide: Protein-L-isoaspartate O-methyltransferase (208 aa).

S59 is an active-site residue.

This sequence belongs to the methyltransferase superfamily. L-isoaspartyl/D-aspartyl protein methyltransferase family.

It localises to the cytoplasm. The catalysed reaction is [protein]-L-isoaspartate + S-adenosyl-L-methionine = [protein]-L-isoaspartate alpha-methyl ester + S-adenosyl-L-homocysteine. In terms of biological role, catalyzes the methyl esterification of L-isoaspartyl residues in peptides and proteins that result from spontaneous decomposition of normal L-aspartyl and L-asparaginyl residues. It plays a role in the repair and/or degradation of damaged proteins. In Escherichia fergusonii (strain ATCC 35469 / DSM 13698 / CCUG 18766 / IAM 14443 / JCM 21226 / LMG 7866 / NBRC 102419 / NCTC 12128 / CDC 0568-73), this protein is Protein-L-isoaspartate O-methyltransferase.